The chain runs to 165 residues: MAGFGEPGIDTVDAAGLTVGVVAARWHGELTDHMLERAVAAADACGARSVVARVAGSVELPVVAQALARRYDVVVALGVVVRGATAHFDYVCRSVTDGLTRVALDEGKPVGHGVLTVNTIEQARDRAGLPGSAEDKGWATTVAVLDAALAVRGLARTTQRVGFDA.

5-amino-6-(D-ribitylamino)uracil contacts are provided by residues Trp-26, 57–59 (SVE), and 79–81 (VVV). 84–85 (AT) contacts (2S)-2-hydroxy-3-oxobutyl phosphate. His-87 (proton donor) is an active-site residue. His-112 provides a ligand contact to 5-amino-6-(D-ribitylamino)uracil. Residue Arg-126 participates in (2S)-2-hydroxy-3-oxobutyl phosphate binding.

It belongs to the DMRL synthase family.

It carries out the reaction (2S)-2-hydroxy-3-oxobutyl phosphate + 5-amino-6-(D-ribitylamino)uracil = 6,7-dimethyl-8-(1-D-ribityl)lumazine + phosphate + 2 H2O + H(+). It functions in the pathway cofactor biosynthesis; riboflavin biosynthesis; riboflavin from 2-hydroxy-3-oxobutyl phosphate and 5-amino-6-(D-ribitylamino)uracil: step 1/2. In terms of biological role, catalyzes the formation of 6,7-dimethyl-8-ribityllumazine by condensation of 5-amino-6-(D-ribitylamino)uracil with 3,4-dihydroxy-2-butanone 4-phosphate. This is the penultimate step in the biosynthesis of riboflavin. The protein is 6,7-dimethyl-8-ribityllumazine synthase of Salinispora arenicola (strain CNS-205).